A 231-amino-acid chain; its full sequence is Large ribosomal subunit protein uL1 (231 aa).

Belongs to the universal ribosomal protein uL1 family. In terms of assembly, part of the 50S ribosomal subunit.

Functionally, binds directly to 23S rRNA. The L1 stalk is quite mobile in the ribosome, and is involved in E site tRNA release. Its function is as follows. Protein L1 is also a translational repressor protein, it controls the translation of the L11 operon by binding to its mRNA. This is Large ribosomal subunit protein uL1 from Gluconacetobacter diazotrophicus (strain ATCC 49037 / DSM 5601 / CCUG 37298 / CIP 103539 / LMG 7603 / PAl5).